We begin with the raw amino-acid sequence, 29 residues long: Dermaseptin-S5 (29 aa).

Belongs to the frog skin active peptide (FSAP) family. Dermaseptin subfamily. As to expression, expressed by the skin glands.

The protein resides in the secreted. Potent antimicrobial peptide with activity against bacteria and protozoa. Also has activity against fungi. Probably acts by disturbing membrane functions with its amphipathic structure. This Phyllomedusa sauvagei (Sauvage's leaf frog) protein is Dermaseptin-S5.